Consider the following 411-residue polypeptide: Snake venom metalloproteinase VMP1 (411 aa).

The first 20 residues, 1-20, serve as a signal peptide directing secretion; it reads MIQVLLVTICLAAFPYQGSS. The propeptide occupies 21–189; sequence IILESGNVND…KKAFQLNLTP (169 aa). One can recognise a Peptidase M12B domain in the interval 197 to 393; it reads RYVELVIIAD…KNPQCILNKP (197 aa). The Ca(2+) site is built by E200 and D284. Cystine bridges form between C308/C388, C348/C372, and C350/C355. The N-linked (GlcNAc...) asparagine glycan is linked to N311. H333 provides a ligand contact to Zn(2+). E334 is an active-site residue. 2 residues coordinate Zn(2+): H337 and H343. Ca(2+) contacts are provided by C388, N391, V403, N406, L408, and E410.

Belongs to the venom metalloproteinase (M12B) family. P-I subfamily. Monomer. Zn(2+) is required as a cofactor. In terms of tissue distribution, expressed by the venom gland.

It is found in the secreted. Inhibited by EDTA and 1,10-phenanthroline, but not by PMSF. Functionally, this venom zinc protease has fibrinolytic activity. The recombinant enzyme cleaves both alpha- (FGA) and beta-chains (FGB) of fibrinogen, but not the gamma-chain. The recombinant protein does not produce hemorrhage in mice and does not have effect on ADP- or collagen-stimulated platelet aggregation. The polypeptide is Snake venom metalloproteinase VMP1 (Agkistrodon piscivorus leucostoma (Western cottonmouth)).